We begin with the raw amino-acid sequence, 259 residues long: Bisphosphoglycerate mutase (259 aa).

S2 bears the N-acetylserine mark. Residues R10–N17, C23–S24, R62, E89–Y92, R100, and R116–R117 each bind substrate. H11 serves as the catalytic Tele-phosphohistidine intermediate. The active-site Proton donor/acceptor is E89. Position 122 is a phosphothreonine (T122). G189–N190 serves as a coordination point for substrate.

It belongs to the phosphoglycerate mutase family. BPG-dependent PGAM subfamily. As to quaternary structure, homodimer. Expressed in red blood cells. Expressed in placenta (labyrinthine trophoblasts).

The catalysed reaction is (2R)-3-phospho-glyceroyl phosphate = (2R)-2,3-bisphosphoglycerate + H(+). It catalyses the reaction (2R)-2-phosphoglycerate = (2R)-3-phosphoglycerate. At alkaline pH BPGM favors the synthase reaction; however, at lower pH the phosphatase reaction is dominant. Inhibited by citrate. Plays a major role in regulating hemoglobin oxygen affinity by controlling the levels of its allosteric effector 2,3-bisphosphoglycerate (2,3-BPG). Also exhibits mutase (EC 5.4.2.11) activity. This is Bisphosphoglycerate mutase (Bpgm) from Mus musculus (Mouse).